Reading from the N-terminus, the 353-residue chain is Protein MGF 360-13L (353 aa).

The protein belongs to the asfivirus MGF 360 family.

In terms of biological role, plays a role in virus cell tropism, and may be required for efficient virus replication in macrophages. This is Protein MGF 360-13L from African swine fever virus (isolate Warthog/Namibia/Wart80/1980) (ASFV).